A 159-amino-acid chain; its full sequence is NAD(P)H-quinone oxidoreductase subunit J, chloroplastic (159 aa).

The protein belongs to the complex I 30 kDa subunit family. In terms of assembly, NDH is composed of at least 16 different subunits, 5 of which are encoded in the nucleus.

It localises to the plastid. The protein resides in the chloroplast thylakoid membrane. The catalysed reaction is a plastoquinone + NADH + (n+1) H(+)(in) = a plastoquinol + NAD(+) + n H(+)(out). It carries out the reaction a plastoquinone + NADPH + (n+1) H(+)(in) = a plastoquinol + NADP(+) + n H(+)(out). Functionally, NDH shuttles electrons from NAD(P)H:plastoquinone, via FMN and iron-sulfur (Fe-S) centers, to quinones in the photosynthetic chain and possibly in a chloroplast respiratory chain. The immediate electron acceptor for the enzyme in this species is believed to be plastoquinone. Couples the redox reaction to proton translocation, and thus conserves the redox energy in a proton gradient. The polypeptide is NAD(P)H-quinone oxidoreductase subunit J, chloroplastic (Oryza nivara (Indian wild rice)).